Here is a 194-residue protein sequence, read N- to C-terminus: Transposon Tn2501 resolvase (194 aa).

Residues 3–143 (RVFAYCRVST…SGIARAKATG (141 aa)) form the Resolvase/invertase-type recombinase catalytic domain. Serine 11 serves as the catalytic O-(5'-phospho-DNA)-serine intermediate. The H-T-H motif DNA-binding region spans 170-189 (ISAIAREFNTTRQTILRVKA).

Belongs to the site-specific recombinase resolvase family.

Functionally, resolvase catalyzes the resolution (a site-specific recombination) of the cointegrated replicon to yield the final transposition products. This chain is Transposon Tn2501 resolvase (tnpR), found in Escherichia coli.